Here is a 276-residue protein sequence, read N- to C-terminus: Sulfur carrier protein FdhD (276 aa).

Catalysis depends on Cys120, which acts as the Cysteine persulfide intermediate.

This sequence belongs to the FdhD family.

The protein localises to the cytoplasm. Functionally, required for formate dehydrogenase (FDH) activity. Acts as a sulfur carrier protein that transfers sulfur from IscS to the molybdenum cofactor prior to its insertion into FDH. The chain is Sulfur carrier protein FdhD from Bordetella bronchiseptica (strain ATCC BAA-588 / NCTC 13252 / RB50) (Alcaligenes bronchisepticus).